We begin with the raw amino-acid sequence, 92 residues long: Large ribosomal subunit protein bL27 (92 aa).

Residues 1–9 constitute a propeptide that is removed on maturation; the sequence is MLKLNLQFF. The segment at 14–34 is disordered; sequence GVGSTKNGRDSQSKRLGAKRA.

Belongs to the bacterial ribosomal protein bL27 family. Post-translationally, the N-terminus is cleaved by ribosomal processing cysteine protease Prp.

This is Large ribosomal subunit protein bL27 from Exiguobacterium sibiricum (strain DSM 17290 / CCUG 55495 / CIP 109462 / JCM 13490 / 255-15).